The following is a 365-amino-acid chain: Carbamoyl phosphate synthase small chain (365 aa).

2 CPSase regions span residues 1 to 166 and 1 to 169; these read MKRQ…PSPG and MKRQ…GRGH. L-glutamine is bound by residues Ser45, Gly218, and Gly220. The Glutamine amidotransferase type-1 domain maps to 170–357; that stretch reads RVVLVDFGMK…LTMIENFKKE (188 aa). Cys245 (nucleophile) is an active-site residue. L-glutamine-binding residues include Leu246, Gln249, Asn287, Gly289, and Tyr290. Active-site residues include His330 and Glu332.

Belongs to the CarA family. Composed of two chains; the small (or glutamine) chain promotes the hydrolysis of glutamine to ammonia, which is used by the large (or ammonia) chain to synthesize carbamoyl phosphate. Tetramer of heterodimers (alpha,beta)4.

The enzyme catalyses hydrogencarbonate + L-glutamine + 2 ATP + H2O = carbamoyl phosphate + L-glutamate + 2 ADP + phosphate + 2 H(+). The catalysed reaction is L-glutamine + H2O = L-glutamate + NH4(+). The protein operates within amino-acid biosynthesis; L-arginine biosynthesis; carbamoyl phosphate from bicarbonate: step 1/1. Its pathway is pyrimidine metabolism; UMP biosynthesis via de novo pathway; (S)-dihydroorotate from bicarbonate: step 1/3. In terms of biological role, small subunit of the glutamine-dependent carbamoyl phosphate synthetase (CPSase). CPSase catalyzes the formation of carbamoyl phosphate from the ammonia moiety of glutamine, carbonate, and phosphate donated by ATP, constituting the first step of 2 biosynthetic pathways, one leading to arginine and/or urea and the other to pyrimidine nucleotides. The small subunit (glutamine amidotransferase) binds and cleaves glutamine to supply the large subunit with the substrate ammonia. The chain is Carbamoyl phosphate synthase small chain from Bacillus anthracis.